The sequence spans 153 residues: Lipoprotein signal peptidase (153 aa).

2 consecutive transmembrane segments (helical) span residues 61–81 (YFFV…LVKN) and 85–105 (SLWL…NFID). Active-site residues include Asp-114 and Asp-130. The helical transmembrane segment at 125 to 145 (IFNVADSYLTVGVLLLILILW) threads the bilayer.

This sequence belongs to the peptidase A8 family.

The protein localises to the cell membrane. The enzyme catalyses Release of signal peptides from bacterial membrane prolipoproteins. Hydrolyzes -Xaa-Yaa-Zaa-|-(S,diacylglyceryl)Cys-, in which Xaa is hydrophobic (preferably Leu), and Yaa (Ala or Ser) and Zaa (Gly or Ala) have small, neutral side chains.. Its pathway is protein modification; lipoprotein biosynthesis (signal peptide cleavage). This protein specifically catalyzes the removal of signal peptides from prolipoproteins. The protein is Lipoprotein signal peptidase of Streptococcus thermophilus (strain CNRZ 1066).